The chain runs to 521 residues: Cytochrome P450 monooxygenase 105 (521 aa).

The helical transmembrane segment at 12–32 threads the bilayer; sequence GVASPATLAVAAVTFLTALVL. N-linked (GlcNAc...) asparagine glycans are attached at residues Asn-218, Asn-274, and Asn-317. Residue Cys-449 coordinates heme.

The protein belongs to the cytochrome P450 family. Heme serves as cofactor.

The protein resides in the membrane. It participates in secondary metabolite biosynthesis. Cytochrome P450 monooxygenase that is able to use anthracene, carbazole, pyrene, phenanthrene and trans-stilbene as substrates for oxidation. These multifunctional properties against a series of polycyclic aromatic hydrocarbons (PAHs) suggest that CYP105 would play important roles, at least in part, in fungal metabolic systems involved in xenobiotic detoxification. This chain is Cytochrome P450 monooxygenase 105, found in Postia placenta (strain ATCC 44394 / Madison 698-R) (Brown rot fungus).